The following is a 199-amino-acid chain: Recombination protein RecR (199 aa).

Residues 57–72 (CSICGNITESDPCEIC) form a C4-type zinc finger. One can recognise a Toprim domain in the interval 80 to 176 (STIMVVEQPK…KVTRLAAGLA (97 aa)).

Belongs to the RecR family.

In terms of biological role, may play a role in DNA repair. It seems to be involved in an RecBC-independent recombinational process of DNA repair. It may act with RecF and RecO. The protein is Recombination protein RecR of Lactobacillus johnsonii (strain CNCM I-12250 / La1 / NCC 533).